The sequence spans 140 residues: Large ribosomal subunit protein uL11 (140 aa).

It belongs to the universal ribosomal protein uL11 family. As to quaternary structure, part of the ribosomal stalk of the 50S ribosomal subunit. Interacts with L10 and the large rRNA to form the base of the stalk. L10 forms an elongated spine to which L12 dimers bind in a sequential fashion forming a multimeric L10(L12)X complex. In terms of processing, one or more lysine residues are methylated.

Its function is as follows. Forms part of the ribosomal stalk which helps the ribosome interact with GTP-bound translation factors. The sequence is that of Large ribosomal subunit protein uL11 from Dehalococcoides mccartyi (strain CBDB1).